The chain runs to 127 residues: Fluoride-specific ion channel FluC (127 aa).

4 helical membrane passes run 1–21 (MPQG…GACL), 39–59 (FGTL…YGVI), 72–92 (LIGV…VETL), and 105–125 (ANVF…IELM). G79 and T82 together coordinate Na(+).

Belongs to the fluoride channel Fluc/FEX (TC 1.A.43) family.

It is found in the cell inner membrane. The enzyme catalyses fluoride(in) = fluoride(out). With respect to regulation, na(+) is not transported, but it plays an essential structural role and its presence is essential for fluoride channel function. Fluoride-specific ion channel. Important for reducing fluoride concentration in the cell, thus reducing its toxicity. In Alteromonas mediterranea (strain DSM 17117 / CIP 110805 / LMG 28347 / Deep ecotype), this protein is Fluoride-specific ion channel FluC.